We begin with the raw amino-acid sequence, 555 residues long: Zinc transporter ZIP5 (555 aa).

The Extracellular segment spans residues 1 to 242 (MGGQTVWMTL…HSQASKTSEG (242 aa)). The segment at 108–148 (KHPSQSISHSHSHEDHHPSQGTTNSPPLRESLDAKSALSGS) is disordered. A helical membrane pass occupies residues 243 to 263 (FLIALGWASLALLVISLPSLV). At 264 to 314 (ALGMAPLLQPSVLQVFLCPMAGMAVGTLCGDALLHLMPHAIFSQHTDHQNA) the chain is on the cytoplasmic side. A helical membrane pass occupies residues 315-335 (VFKGLSVLGGLYLLFIFESLL). The Extracellular portion of the chain corresponds to 336 to 408 (GLKQHFKNLK…DGIHNLTDGL (73 aa)). The segment covering 363 to 374 (TSSANQNESSGH) has biased composition (polar residues). The tract at residues 363-383 (TSSANQNESSGHGHSHGQAEP) is disordered. The chain crosses the membrane as a helical span at residues 409-429 (AIGVAFSQSLTGGFSTAIAVF). Residues 430-452 (CHELPHELGDLAVLLSAGWPVRR) are Cytoplasmic-facing. The chain crosses the membrane as a helical span at residues 453-473 (LLVFSGLSALLGFVGVLAGSA). Over 474 to 482 (LGNHWASHS) the chain is Extracellular. A helical membrane pass occupies residues 483–503 (PWILTLTAGVFLYVALADMMP). Residues 504–518 (EMLHGACGSVSPLKR) are Cytoplasmic-facing. Residues 519–539 (FLLQALGLLTGGAIMLCIALF) form a helical membrane-spanning segment. Residues 540–555 (EDHIAVSLGENSLGEN) lie on the Extracellular side of the membrane.

It belongs to the ZIP transporter (TC 2.A.5) family.

The protein localises to the basolateral cell membrane. It carries out the reaction Zn(2+)(in) = Zn(2+)(out). Functionally, uniporter that transports zinc(2+) into polarized cells of enterocytes, pancreatic acinar and endoderm cells across the basolateral membrane and participates, notably, in zinc excretion from the intestine by the uptake of zinc from the blood into the intestine. The transport mechanism is temperature- and concentration-dependent and saturable. Mediates zinc homeostasis that is essential for venous angiogenesis. In Danio rerio (Zebrafish), this protein is Zinc transporter ZIP5 (slc39a5).